A 216-amino-acid chain; its full sequence is tRNA (guanine-N(7)-)-methyltransferase (216 aa).

The S-adenosyl-L-methionine site is built by Glu44, Glu69, Asn96, and Asp118. The active site involves Asp118. Lys122 is a substrate binding site. The interval 124 to 129 (RHEKRR) is interaction with RNA. Residues Asp154 and 191 to 194 (TEYE) contribute to the substrate site.

Belongs to the class I-like SAM-binding methyltransferase superfamily. TrmB family.

The enzyme catalyses guanosine(46) in tRNA + S-adenosyl-L-methionine = N(7)-methylguanosine(46) in tRNA + S-adenosyl-L-homocysteine. It functions in the pathway tRNA modification; N(7)-methylguanine-tRNA biosynthesis. In terms of biological role, catalyzes the formation of N(7)-methylguanine at position 46 (m7G46) in tRNA. This is tRNA (guanine-N(7)-)-methyltransferase from Geobacillus thermodenitrificans (strain NG80-2).